A 345-amino-acid chain; its full sequence is MLGALADGRDLSAADTAWAMNEIMSDNATSAQIAAFGVAIKIKGPTPEELGGLATGMFEHARLVSIDGDAVDIVGTGGDRSGSVNISTMSSIVVAAAGVPVVKHGNRAASSKSGGADVLEALGVRLNLGPEAVARCVREVGIGFCFAPVFHPALRFAGAARREIGIPTVFNILGPLTNPARPRAGLVGCAFPELLEVVAGVFAERGASALVVRGADGLDEITTSDVTDTWVVSGGRMRRTTIDPTRLGIARVDLDALRGGDAEVNAGVARSVFAGTAGAVRDAVLVNSAAAIVAYDLSRGVGDPDADVHDALAAGMARAAAAIDGGQAAALLERWAKLSNTLGDR.

5-phospho-alpha-D-ribose 1-diphosphate is bound by residues Gly-75, 78–79, Ser-83, 85–88, 103–111, and Gly-115; these read GD, NIST, and KHGNRAASS. Anthranilate is bound at residue Gly-75. Ser-87 is a Mg(2+) binding site. Asn-106 is a binding site for anthranilate. Arg-161 is a binding site for anthranilate. Residues Asp-219 and Glu-220 each contribute to the Mg(2+) site.

Belongs to the anthranilate phosphoribosyltransferase family. As to quaternary structure, homodimer. Mg(2+) serves as cofactor.

It carries out the reaction N-(5-phospho-beta-D-ribosyl)anthranilate + diphosphate = 5-phospho-alpha-D-ribose 1-diphosphate + anthranilate. It participates in amino-acid biosynthesis; L-tryptophan biosynthesis; L-tryptophan from chorismate: step 2/5. Functionally, catalyzes the transfer of the phosphoribosyl group of 5-phosphorylribose-1-pyrophosphate (PRPP) to anthranilate to yield N-(5'-phosphoribosyl)-anthranilate (PRA). In Nocardia farcinica (strain IFM 10152), this protein is Anthranilate phosphoribosyltransferase.